A 417-amino-acid chain; its full sequence is Methylthioribose-1-phosphate isomerase (417 aa).

The active-site Proton donor is the Asp-285.

It belongs to the eIF-2B alpha/beta/delta subunits family. MtnA subfamily.

It is found in the cytoplasm. The protein resides in the nucleus. The catalysed reaction is 5-(methylsulfanyl)-alpha-D-ribose 1-phosphate = 5-(methylsulfanyl)-D-ribulose 1-phosphate. It participates in amino-acid biosynthesis; L-methionine biosynthesis via salvage pathway; L-methionine from S-methyl-5-thio-alpha-D-ribose 1-phosphate: step 1/6. Catalyzes the interconversion of methylthioribose-1-phosphate (MTR-1-P) into methylthioribulose-1-phosphate (MTRu-1-P). This is Methylthioribose-1-phosphate isomerase from Lachancea thermotolerans (strain ATCC 56472 / CBS 6340 / NRRL Y-8284) (Yeast).